The sequence spans 446 residues: tRNA-2-methylthio-N(6)-dimethylallyladenosine synthase (446 aa).

The 118-residue stretch at 3–120 (KKIYIKTFGC…LPEMLKQRRS (118 aa)) folds into the MTTase N-terminal domain. [4Fe-4S] cluster contacts are provided by Cys12, Cys49, Cys83, Cys157, Cys161, and Cys164. One can recognise a Radical SAM core domain in the interval 143-375 (KVEGATAFVS…QAVIDQNTRR (233 aa)). Positions 378-444 (DEMVGSVQRI…AYTLRGEIVV (67 aa)) constitute a TRAM domain.

It belongs to the methylthiotransferase family. MiaB subfamily. In terms of assembly, monomer. It depends on [4Fe-4S] cluster as a cofactor.

It is found in the cytoplasm. It carries out the reaction N(6)-dimethylallyladenosine(37) in tRNA + (sulfur carrier)-SH + AH2 + 2 S-adenosyl-L-methionine = 2-methylsulfanyl-N(6)-dimethylallyladenosine(37) in tRNA + (sulfur carrier)-H + 5'-deoxyadenosine + L-methionine + A + S-adenosyl-L-homocysteine + 2 H(+). Its function is as follows. Catalyzes the methylthiolation of N6-(dimethylallyl)adenosine (i(6)A), leading to the formation of 2-methylthio-N6-(dimethylallyl)adenosine (ms(2)i(6)A) at position 37 in tRNAs that read codons beginning with uridine. The protein is tRNA-2-methylthio-N(6)-dimethylallyladenosine synthase of Herminiimonas arsenicoxydans.